The primary structure comprises 430 residues: Cytochrome c biogenesis protein CcsB (430 aa).

A run of 3 helical transmembrane segments spans residues leucine 14–isoleucine 34, serine 72–arginine 92, and alanine 162–serine 182.

This sequence belongs to the Ccs1/CcsB family. May interact with CcsA.

It localises to the cellular thylakoid membrane. In terms of biological role, required during biogenesis of c-type cytochromes (cytochrome c6 and cytochrome f) at the step of heme attachment. The chain is Cytochrome c biogenesis protein CcsB from Prochlorococcus marinus (strain MIT 9313).